Here is a 513-residue protein sequence, read N- to C-terminus: Tryptophan--tRNA ligase 1 (513 aa).

The 'HIGH' region motif lies at 86–94; that stretch reads PTGDPHIGH. The 'KMSKS' region signature appears at 393 to 397; that stretch reads KMSSS.

The protein belongs to the class-I aminoacyl-tRNA synthetase family.

The protein localises to the cytoplasm. The enzyme catalyses tRNA(Trp) + L-tryptophan + ATP = L-tryptophyl-tRNA(Trp) + AMP + diphosphate + H(+). In Halobacterium salinarum (strain ATCC 700922 / JCM 11081 / NRC-1) (Halobacterium halobium), this protein is Tryptophan--tRNA ligase 1.